Here is a 496-residue protein sequence, read N- to C-terminus: Glutamyl-tRNA(Gln) amidotransferase subunit A (496 aa).

Residues K79 and S159 each act as charge relay system in the active site. Residue S183 is the Acyl-ester intermediate of the active site.

It belongs to the amidase family. GatA subfamily. As to quaternary structure, heterotrimer of A, B and C subunits.

The catalysed reaction is L-glutamyl-tRNA(Gln) + L-glutamine + ATP + H2O = L-glutaminyl-tRNA(Gln) + L-glutamate + ADP + phosphate + H(+). Functionally, allows the formation of correctly charged Gln-tRNA(Gln) through the transamidation of misacylated Glu-tRNA(Gln) in organisms which lack glutaminyl-tRNA synthetase. The reaction takes place in the presence of glutamine and ATP through an activated gamma-phospho-Glu-tRNA(Gln). This Bartonella quintana (strain Toulouse) (Rochalimaea quintana) protein is Glutamyl-tRNA(Gln) amidotransferase subunit A.